The sequence spans 343 residues: Acetylglutamate kinase (343 aa).

Residues 98-99 (GG), R120, and N219 contribute to the substrate site.

Belongs to the acetylglutamate kinase family. ArgB subfamily.

Its subcellular location is the cytoplasm. It catalyses the reaction N-acetyl-L-glutamate + ATP = N-acetyl-L-glutamyl 5-phosphate + ADP. It participates in amino-acid biosynthesis; L-arginine biosynthesis; N(2)-acetyl-L-ornithine from L-glutamate: step 2/4. Functionally, catalyzes the ATP-dependent phosphorylation of N-acetyl-L-glutamate. The polypeptide is Acetylglutamate kinase (Frankia alni (strain DSM 45986 / CECT 9034 / ACN14a)).